A 609-amino-acid polypeptide reads, in one-letter code: Ovochymase-2 (609 aa).

The signal sequence occupies residues 1–22 (MPISKDKLILILGMVCLEQGHS). The propeptide at 23 to 51 (ETLSSIRNPDCGQSLVKPQPQNYFSLFSR) is activation peptide. The Peptidase S1 domain maps to 52 to 299 (IVGGSQVEKG…VLPWILKHIQ (248 aa)). Cys-77 and Cys-93 are disulfide-bonded. The active-site Charge relay system is His-92. The N-linked (GlcNAc...) asparagine glycan is linked to Asn-104. Glu-119 is a Ca(2+) binding site. The Charge relay system role is filled by Asp-142. 4 disulfide bridges follow: Cys-176–Cys-246, Cys-207–Cys-225, Cys-236–Cys-265, and Cys-311–Cys-341. Catalysis depends on Ser-240, which acts as the Charge relay system. CUB domains follow at residues 311-421 (CSEP…YKAL) and 431-543 (CRSL…ISFI). Residue Asn-356 is glycosylated (N-linked (GlcNAc...) asparagine). Residues Cys-365 and Cys-384 are joined by a disulfide bond. Asn-415 is a glycosylation site (N-linked (GlcNAc...) asparagine). 2 disulfides stabilise this stretch: Cys-431–Cys-458 and Cys-485–Cys-506. N-linked (GlcNAc...) asparagine glycans are attached at residues Asn-530 and Asn-549. Positions 580–609 (HTKPPYEEDIGEMPAIDSGLLKQGERRGKH) are disordered.

It belongs to the peptidase S1 family. Only expressed in uterus tissue. Expressed in the initial segment (IS) of the caput epididymis, the region most proximal to the testis.

The protein resides in the secreted. May be required for sperm ADAM3 processing and consequential sperm fertilizing ability. In vitro, has an endopeptidase activity. This Mus musculus (Mouse) protein is Ovochymase-2.